Reading from the N-terminus, the 276-residue chain is Ribosomal RNA small subunit methyltransferase I (276 aa).

This sequence belongs to the methyltransferase superfamily. RsmI family.

Its subcellular location is the cytoplasm. The catalysed reaction is cytidine(1402) in 16S rRNA + S-adenosyl-L-methionine = 2'-O-methylcytidine(1402) in 16S rRNA + S-adenosyl-L-homocysteine + H(+). Its function is as follows. Catalyzes the 2'-O-methylation of the ribose of cytidine 1402 (C1402) in 16S rRNA. This is Ribosomal RNA small subunit methyltransferase I from Mycoplasma pneumoniae (strain ATCC 29342 / M129 / Subtype 1) (Mycoplasmoides pneumoniae).